The primary structure comprises 179 residues: Adenine phosphoribosyltransferase (179 aa).

This sequence belongs to the purine/pyrimidine phosphoribosyltransferase family. As to quaternary structure, homodimer.

Its subcellular location is the cytoplasm. The enzyme catalyses AMP + diphosphate = 5-phospho-alpha-D-ribose 1-diphosphate + adenine. It functions in the pathway purine metabolism; AMP biosynthesis via salvage pathway; AMP from adenine: step 1/1. Its function is as follows. Catalyzes a salvage reaction resulting in the formation of AMP, that is energically less costly than de novo synthesis. This Beijerinckia indica subsp. indica (strain ATCC 9039 / DSM 1715 / NCIMB 8712) protein is Adenine phosphoribosyltransferase.